We begin with the raw amino-acid sequence, 123 residues long: Small ribosomal subunit protein uS12 (123 aa).

D89 is modified (3-methylthioaspartic acid). Positions 101-123 are disordered; sequence SLDTSGVKDRKQGRSKYGAKRPK. Positions 113–123 are enriched in basic residues; that stretch reads GRSKYGAKRPK.

It belongs to the universal ribosomal protein uS12 family. In terms of assembly, part of the 30S ribosomal subunit. Contacts proteins S8 and S17. May interact with IF1 in the 30S initiation complex.

In terms of biological role, with S4 and S5 plays an important role in translational accuracy. Its function is as follows. Interacts with and stabilizes bases of the 16S rRNA that are involved in tRNA selection in the A site and with the mRNA backbone. Located at the interface of the 30S and 50S subunits, it traverses the body of the 30S subunit contacting proteins on the other side and probably holding the rRNA structure together. The combined cluster of proteins S8, S12 and S17 appears to hold together the shoulder and platform of the 30S subunit. In Stutzerimonas stutzeri (strain A1501) (Pseudomonas stutzeri), this protein is Small ribosomal subunit protein uS12.